The primary structure comprises 500 residues: MPSPEEDPQPLLKDQEETAYDSDGKVLSFGIDYDTESGGSTVVPSFSWRKLWLFTGPGFLMCIAFLDPGNLEGDLQAGAIAGYSLLWLLLWATAMGLLVQLLSARLGVATGRHLAELCREEYPTWARMILWIMAELALIGADIQEVIGSAIAIQILSNGVLPLWAGVIITASDCFIFLFLENYGVRKLEAAFGILIGIMAVTFAWMFADAKPSAPELFLGILIPKLSSKTIKQAVGVVGCIIMPHNVFLHSALVQSREIDHNKKGQVQEALRYYSIESTAALAISFMINLFVTTIFAKGFHGTELANSIGLVNAGQYLQDKYGGGFFPILYIWGIGLLAAGQSSTITGTYAGQFIMGGFLNLGLKKWLRALITRSCAIIPTIIVALVFDTSEDSLDVLNEWLNMLQSIQIPFALIPLLCLVSKEQIMGTFTVGPILKMVSWLVAALVMLINGYLLLDFFSNEVTGVVFTTVVCAFTGAYVTFIIYLISREVTISTWYCPT.

Helical transmembrane passes span 51-71 (LWLF…PGNL), 79-99 (AIAG…GLLV), 128-148 (MILW…EVIG), 160-180 (VLPL…FLFL), 188-208 (LEAA…WMFA), 234-254 (AVGV…SALV), 280-300 (AALA…AKGF), 322-342 (YGGG…AAGQ), 370-390 (ALIT…VFDT), 401-421 (WLNM…LCLV), 439-459 (VSWL…LDFF), and 467-487 (VFTT…IYLI).

It belongs to the NRAMP (TC 2.A.55) family. In terms of tissue distribution, expressed in roots, stems, buds and leaves.

The protein localises to the golgi apparatus. Its subcellular location is the trans-Golgi network membrane. It carries out the reaction Mn(2+)(in) = Mn(2+)(out). The catalysed reaction is Fe(2+)(in) = Fe(2+)(out). In terms of biological role, divalent metal transporter. Can transport manganese (Mn) and iron (Fe). Involved in the control of cell-to-cell transport of manganese (Mn) between organs and tissues to monitor Mn homeostasis. In Populus trichocarpa (Western balsam poplar), this protein is Metal transporter Nramp3.1.